A 411-amino-acid chain; its full sequence is Citrate synthase (411 aa).

Active-site residues include His304 and Asp363.

It belongs to the citrate synthase family.

It carries out the reaction oxaloacetate + acetyl-CoA + H2O = citrate + CoA + H(+). Its pathway is carbohydrate metabolism; tricarboxylic acid cycle; isocitrate from oxaloacetate: step 1/2. The chain is Citrate synthase (gltA) from Rickettsia conorii subsp. caspia (strain A-167) (Astrakhan rickettsia).